The primary structure comprises 565 residues: Urocanate hydratase (565 aa).

Residues 61–62, Q139, 185–187, E205, R210, 251–252, 272–276, 282–283, and Y331 each bind NAD(+); these read GG, GMG, NA, QTSAH, and YL. The active site involves C419. The segment at 453 to 472 is disordered; the sequence is LDSGSVASPNRETESMRDGS. The segment covering 463-472 has biased composition (basic and acidic residues); that stretch reads RETESMRDGS. G501 contacts NAD(+).

This sequence belongs to the urocanase family. The cofactor is NAD(+).

It is found in the cytoplasm. The enzyme catalyses 4-imidazolone-5-propanoate = trans-urocanate + H2O. Its pathway is amino-acid degradation; L-histidine degradation into L-glutamate; N-formimidoyl-L-glutamate from L-histidine: step 2/3. Catalyzes the conversion of urocanate to 4-imidazolone-5-propionate. The sequence is that of Urocanate hydratase from Pseudomonas savastanoi pv. phaseolicola (strain 1448A / Race 6) (Pseudomonas syringae pv. phaseolicola (strain 1448A / Race 6)).